Reading from the N-terminus, the 483-residue chain is Glycogen synthase kinase-3 alpha (483 aa).

The span at 1-15 (MSGGGPSGGGPGGSG) shows a compositional bias: gly residues. Residues 1–96 (MSGGGPSGGG…PPPGVKLGRD (96 aa)) form a disordered region. Position 2 is an N-acetylserine (Ser-2). Ser-2 is modified (phosphoserine). Position 21 is a phosphoserine; by PKB/AKT1 (Ser-21). The span at 25–82 (PGGGGGGGGGGPGGSASGPGGTGGGKASVGAMGGGVGASSSGGGPSGSGGGGSGGPGA) shows a compositional bias: gly residues. A phosphoserine mark is found at Ser-72, Ser-77, and Ser-97. The Protein kinase domain occupies 119 to 403 (YTDIKVIGNG…PLEACAHSFF (285 aa)). ATP-binding positions include 125–133 (IGNGSFGVV) and Lys-148. Asp-244 acts as the Proton acceptor in catalysis. Tyr-279 carries the phosphotyrosine modification. Positions 443–483 (PHLRSPSGPATLTSSSQALTETQTGQDWQAPDATPTLTNSS) are disordered. A compositionally biased stretch (polar residues) spans 450 to 469 (GPATLTSSSQALTETQTGQD).

It belongs to the protein kinase superfamily. CMGC Ser/Thr protein kinase family. GSK-3 subfamily. Monomer. Interacts with ARRB2, AXIN1 and CTNNB1/beta-catenin. Interacts with CTNND2. Interacts with LMBR1L. Interacts with DDX3X. Interacts with TNFRSF10B. In terms of processing, phosphorylated by AKT1 at Ser-21: upon insulin-mediated signaling, the activated PKB/AKT1 protein kinase phosphorylates and deactivates GSK3A, resulting in the dephosphorylation and activation of GYS1. Activated by phosphorylation at Tyr-279.

It catalyses the reaction L-seryl-[tau protein] + ATP = O-phospho-L-seryl-[tau protein] + ADP + H(+). The catalysed reaction is L-threonyl-[tau protein] + ATP = O-phospho-L-threonyl-[tau protein] + ADP + H(+). It carries out the reaction L-seryl-[protein] + ATP = O-phospho-L-seryl-[protein] + ADP + H(+). The enzyme catalyses L-threonyl-[protein] + ATP = O-phospho-L-threonyl-[protein] + ADP + H(+). Activated by phosphorylation at Tyr-279. In response to insulin, inhibited by phosphorylation at Ser-21 by PKB/AKT1; phosphorylation at this site causes a conformational change, preventing access of substrates to the active site. Inhibited by lithium. Constitutively active protein kinase that acts as a negative regulator in the hormonal control of glucose homeostasis, Wnt signaling and regulation of transcription factors and microtubules, by phosphorylating and inactivating glycogen synthase (GYS1 or GYS2), CTNNB1/beta-catenin, APC and AXIN1. Requires primed phosphorylation of the majority of its substrates. Contributes to insulin regulation of glycogen synthesis by phosphorylating and inhibiting GYS1 activity and hence glycogen synthesis. Regulates glycogen metabolism in liver, but not in muscle. May also mediate the development of insulin resistance by regulating activation of transcription factors. In Wnt signaling, regulates the level and transcriptional activity of nuclear CTNNB1/beta-catenin. Facilitates amyloid precursor protein (APP) processing and the generation of APP-derived amyloid plaques found in Alzheimer disease. May be involved in the regulation of replication in pancreatic beta-cells. Is necessary for the establishment of neuronal polarity and axon outgrowth. Through phosphorylation of the anti-apoptotic protein MCL1, may control cell apoptosis in response to growth factors deprivation. Acts as a regulator of autophagy by mediating phosphorylation of KAT5/TIP60 under starvation conditions, activating KAT5/TIP60 acetyltransferase activity and promoting acetylation of key autophagy regulators, such as ULK1 and RUBCNL/Pacer. Negatively regulates extrinsic apoptotic signaling pathway via death domain receptors. Promotes the formation of an anti-apoptotic complex, made of DDX3X, BRIC2 and GSK3B, at death receptors, including TNFRSF10B. The anti-apoptotic function is most effective with weak apoptotic signals and can be overcome by stronger stimulation. In Rattus norvegicus (Rat), this protein is Glycogen synthase kinase-3 alpha (Gsk3a).